Reading from the N-terminus, the 239-residue chain is Aspartate/glutamate leucyltransferase (239 aa).

It belongs to the R-transferase family. Bpt subfamily.

The protein localises to the cytoplasm. It carries out the reaction N-terminal L-glutamyl-[protein] + L-leucyl-tRNA(Leu) = N-terminal L-leucyl-L-glutamyl-[protein] + tRNA(Leu) + H(+). It catalyses the reaction N-terminal L-aspartyl-[protein] + L-leucyl-tRNA(Leu) = N-terminal L-leucyl-L-aspartyl-[protein] + tRNA(Leu) + H(+). Functionally, functions in the N-end rule pathway of protein degradation where it conjugates Leu from its aminoacyl-tRNA to the N-termini of proteins containing an N-terminal aspartate or glutamate. In Alkalilimnicola ehrlichii (strain ATCC BAA-1101 / DSM 17681 / MLHE-1), this protein is Aspartate/glutamate leucyltransferase.